Consider the following 490-residue polypeptide: Flap endonuclease 1 (490 aa).

Positions 1 to 106 (MGIKGLTKFL…DELTKRDERR (106 aa)) are N-domain. D34 lines the Mg(2+) pocket. Residues R47 and R72 each coordinate DNA. Mg(2+) is bound by residues D88, E160, E162, D181, and D183. Positions 124–266 (LIKKQSVRTI…STAYKLLKKY (143 aa)) are I-domain. E160 contributes to the DNA binding site. Positions 244 and 246 each coordinate DNA. Residue D246 coordinates Mg(2+). An interaction with PCNA region spans residues 351–359 (SQTCLDGFF). Disordered stretches follow at residues 364–396 (NERK…SLSC) and 421–490 (SSQA…SDED). Over residues 430–442 (ENSSEAPNQSSEI) the composition is skewed to polar residues. The span at 443–454 (KVNKIEENKDSE) shows a compositional bias: basic and acidic residues. Over residues 455–469 (SSTVENTPSLQTKSP) the composition is skewed to polar residues.

Belongs to the XPG/RAD2 endonuclease family. FEN1 subfamily. As to quaternary structure, interacts with PCNA. Three molecules of FEN1 bind to one PCNA trimer with each molecule binding to one PCNA monomer. PCNA stimulates the nuclease activity without altering cleavage specificity. Requires Mg(2+) as cofactor. Phosphorylated. Phosphorylation upon DNA damage induces relocalization to the nuclear plasma.

The protein localises to the nucleus. It localises to the nucleolus. The protein resides in the nucleoplasm. Its subcellular location is the mitochondrion. In terms of biological role, structure-specific nuclease with 5'-flap endonuclease and 5'-3' exonuclease activities involved in DNA replication and repair. During DNA replication, cleaves the 5'-overhanging flap structure that is generated by displacement synthesis when DNA polymerase encounters the 5'-end of a downstream Okazaki fragment. It enters the flap from the 5'-end and then tracks to cleave the flap base, leaving a nick for ligation. Also involved in the long patch base excision repair (LP-BER) pathway, by cleaving within the apurinic/apyrimidinic (AP) site-terminated flap. Acts as a genome stabilization factor that prevents flaps from equilibrating into structures that lead to duplications and deletions. Also possesses 5'-3' exonuclease activity on nicked or gapped double-stranded DNA, and exhibits RNase H activity. Also involved in replication and repair of rDNA and in repairing mitochondrial DNA. The sequence is that of Flap endonuclease 1 from Cryptosporidium parvum (strain Iowa II).